The sequence spans 1431 residues: Trophinin (1431 aa).

3 disordered regions span residues 1–24 (MDRR…PGSL), 341–365 (SRAR…QGAQ), and 401–433 (PTTR…PWGR). Over residues 405 to 415 (TRGKRNRKSKH) the composition is skewed to basic residues. An MAGE domain is found at 444 to 642 (LQERANKLVK…KDWAVQYREA (199 aa)). Tandem repeats lie at residues 751 to 760 (FSGGPGITFG) and 769 to 778 (FSNTASISFG). A 62 X 10 AA approximate tandem repeats region spans residues 751–1430 (FSGGPGITFG…ASLGACGFSY (680 aa)). One copy of the 3; approximate repeat lies at 779 to 786 (GTLSTSSS). A run of 2 repeats spans residues 787 to 796 (FSSAASISFG) and 805 to 814 (FSSEASISFG). Residues 823–833 (FSGGVSSSFSG) form a 6; approximate repeat. Repeat unit 7 spans residues 841-850 (FSGGASSGFG). The stretch at 859-870 (FSGVLSTSTSFG) is one 8; approximate repeat. One copy of the 9; approximate repeat lies at 879–890 (FSSALSTSTGFG). 5 consecutive repeat copies span residues 901–910 (GSPSSSGSFG), 911–920 (GTLSTSICFG), 921–930 (GSPCTSTGFG), 931–940 (GTLSTSVSFG), and 941–950 (GSSSTSANFG). Residues 951 to 960 (GTLSTSICFD) form a 15; approximate repeat. Tandem repeats lie at residues 961-970 (GSPSTGAGFG), 971-980 (GALNTSASFG), 981-990 (SVLNTSTGFG), 991-1000 (GAMSTSADFG), 1001-1010 (GTLSTSVCFG), and 1011-1020 (GSPGTSVSFG). Residues 1021 to 1030 (SALNTNAGYG) form a 22; approximate repeat. Tandem repeats lie at residues 1031 to 1040 (GAVSTNTDFG), 1041 to 1050 (GTLSTSVCFG), 1051 to 1060 (GSPSTSAGFG), and 1061 to 1070 (GALNTNASFG). The stretch at 1071–1080 (CAVSTSASFS) is one 27; approximate repeat. The 28; approximate repeat unit spans residues 1081–1090 (GAVSTSACFS). 8 tandem repeats follow at residues 1091–1100 (GAPITNPGFG), 1101–1110 (GAFSTSAGFG), 1111–1120 (GALSTAADFG), 1121–1130 (GTPSNSIGFG), 1131–1140 (AAPSTSVSFG), 1141–1150 (GAHGTSLCFG), 1151–1160 (GAPSTSLCFG), and 1161–1170 (SASNTNLCFG). The 37; approximate repeat unit spans residues 1171–1180 (GPPSTSACFS). A 38; approximate repeat occupies 1181-1190 (GATSPSFCDG). 3 tandem repeats follow at residues 1191-1200 (PSTSTGFSFG), 1201-1210 (NGLSTNAGFG), and 1211-1220 (GGLNTSAGFG). One copy of the 42; approximate repeat lies at 1221–1230 (GGLGTSAGFS). One copy of the 43; approximate repeat lies at 1231–1240 (GGLSTSSGFD). Repeat copies occupy residues 1241 to 1250 (GGLGTSAGFG) and 1251 to 1260 (GGPGTSTGFG). A 46; approximate repeat occupies 1261–1270 (GGLGTSAGFS). Tandem repeats lie at residues 1271–1280 (GGLGTSAGFG), 1281–1290 (GGLVTSDGFG), and 1291–1300 (GGLGTNASFG). The stretch at 1301–1310 (STLGTSAGFS) is one 50; approximate repeat. Copy 51 of the repeat occupies 1311–1320 (GGLSTSDGFG). The 52; approximate repeat unit spans residues 1321–1330 (SRPNASFDRG). A 53; approximate repeat occupies 1331-1340 (LSTIIGFGSG). The 54; approximate repeat unit spans residues 1341-1350 (SNTSTGFTGE). Residues 1342-1363 (NTSTGFTGEPSTSTGFSSGPSS) are compositionally biased toward low complexity. Residues 1342 to 1365 (NTSTGFTGEPSTSTGFSSGPSSIV) form a disordered region. Residues 1351–1360 (PSTSTGFSSG) form a 55; approximate repeat. Residues 1361–1370 (PSSIVGFSGG) form a 56; approximate repeat. One copy of the 57; approximate repeat lies at 1371-1380 (PSTGVGFCSG). Residues 1381 to 1390 (PSTSGFSGGP) form a 58; approximate repeat. The 59; approximate repeat unit spans residues 1391–1400 (STGAGFGGGP). Residues 1401–1410 (NTGAGFGGGP) form a 60; approximate repeat. Residues 1411 to 1420 (STSAGFGSGA) form a 61; approximate repeat. The stretch at 1421 to 1430 (ASLGACGFSY) is one 62; approximate repeat.

In terms of assembly, directly binds bystin, and indirectly tastin. Strong expression at implantation sites. Found in the placenta from the sixth week of pregnancy. Was localized in the cytoplasm of the syncytiotrophoblast in the chorionic villi and in endometrial decidual cells at the uteroplacental interface. After week 10, the level decreased and then disappeared from placental villi. Also found in macrophages.

Could be involved with bystin and tastin in a cell adhesion molecule complex that mediates an initial attachment of the blastocyst to uterine epithelial cells at the time of the embryo implantation. Directly responsible for homophilic cell adhesion. The protein is Trophinin (TRO) of Homo sapiens (Human).